The primary structure comprises 150 residues: Avidin-related protein 6 (150 aa).

The first 24 residues, 1–24, serve as a signal peptide directing secretion; it reads MVHATSPLLLLLLLSLALVAPGLS. The Avidin-like domain occupies 26 to 147; that stretch reads RKCSLTGEWD…GYNNFTRQRT (122 aa). Residues cysteine 28 and cysteine 105 are joined by a disulfide bond. The biotin site is built by asparagine 36 and serine 40. Residue asparagine 54 is glycosylated (N-linked (GlcNAc...) asparagine). Biotin is bound by residues tyrosine 57, threonine 59, and aspartate 63. A glycan (N-linked (GlcNAc...) asparagine) is linked at asparagine 93. Positions 95, 99, and 140 each coordinate biotin. The N-linked (GlcNAc...) asparagine glycan is linked to asparagine 141.

Belongs to the avidin/streptavidin family. As to quaternary structure, homotetramer. Glycosylated.

It localises to the secreted. Forms a strong non-covalent specific complex with biotin. This is Avidin-related protein 6 (AVR6) from Gallus gallus (Chicken).